The following is a 503-amino-acid chain: MEKLLALIVVLVILLSLALFYLCNILWLRAVKIRKKLRRQGIRGPKPTFLYGNTKEIKRIRQELKFSQKQGTNNFISTLFPHFLLCRETYGPVFLYSTGALEILQVSHPDMVKDIGRWTPSELGKPNYLKKSRKALFGGGLFTENGDEWAYQRKIIAPEFFMDKIKGMIQLIEDATVTVLEAWEDMIDDVGGCREIVVDDYLRNLSADVIARACFGSSFTKGEEIFCKLRQLQKVIAQQDSFVGLSALWKYLPTKSNQEIQMLDEQVRLLILDVAKEQHHYQDSHNSLVNAIIDGAQDGRSAAEAEDFIVGNCKTIYFGGHESTAVTAIWCLMLLATHSEAMEVCRGRSTLDVDALRRLKIVTMVIQETLRLYPPASVMMQEALTDVKLGNIEVPRGTIVQVPRLMLHLDKEAWGADADEFRPDRFANGVAAACRAAHMYVPFGHGPRTCIGQNLAMAELKVVLARLLTKFAFSPSPRYRHSPAFRLTIEPGFGLPLMVTKLP.

The Lumenal segment spans residues 1-6; it reads MEKLLA. A helical; Signal-anchor for type III membrane protein transmembrane segment spans residues 7–27; sequence LIVVLVILLSLALFYLCNILW. Over 28–503 the chain is Cytoplasmic; sequence LRAVKIRKKL…GLPLMVTKLP (476 aa). Position 450 (cysteine 450) interacts with heme.

The protein belongs to the cytochrome P450 family. Heme serves as cofactor.

The protein resides in the membrane. Probably not involved in gibberellin metabolism since over-expression of CYP714C1 in a heterologous system does not induce semi-dwarfism. In Oryza sativa subsp. japonica (Rice), this protein is Cytochrome P450 714C1 (CYP714C1).